The following is a 642-amino-acid chain: Mini-chromosome maintenance complex-binding protein (642 aa).

Over residues Ala151–Pro161 the composition is skewed to polar residues. The tract at residues Ala151–Ala188 is disordered. Ser154 carries the post-translational modification Phosphoserine. Thr160 bears the Phosphothreonine mark. 2 positions are modified to phosphoserine: Ser167 and Ser298.

The protein belongs to the MCMBP family. As to quaternary structure, interacts with the MCM complex: associates with the MCM3-7 complex which lacks MCM2, while it does not interact with the MCM complex when MCM2 is present (MCM2-7 complex). Interacts with the RPA complex, when composed of all RPA1, RPA2 and RPA3 components, but not with RPA1 or RPA2 alone.

Its subcellular location is the nucleus. In terms of biological role, associated component of the MCM complex that acts as a regulator of DNA replication. Binds to the MCM complex during late S phase and promotes the disassembly of the MCM complex from chromatin, thereby acting as a key regulator of pre-replication complex (pre-RC) unloading from replicated DNA. Can dissociate the MCM complex without addition of ATP; probably acts by destabilizing interactions of each individual subunits of the MCM complex. Required for sister chromatid cohesion. In Bos taurus (Bovine), this protein is Mini-chromosome maintenance complex-binding protein (MCMBP).